A 545-amino-acid chain; its full sequence is CTP synthase (545 aa).

The amidoligase domain stretch occupies residues 1–266 (MTTNYIFVTG…DDYICKRFSL (266 aa)). Serine 14 provides a ligand contact to CTP. Serine 14 contacts UTP. ATP contacts are provided by residues 15–20 (SLGKGI) and aspartate 72. Positions 72 and 140 each coordinate Mg(2+). CTP-binding positions include 147 to 149 (DIE), 187 to 192 (KTKPTQ), and lysine 223. UTP-binding positions include 187 to 192 (KTKPTQ) and lysine 223. Residue 239 to 241 (KDV) participates in ATP binding. The Glutamine amidotransferase type-1 domain occupies 291-542 (TIGMIGKYVE…VKAAGDYQKR (252 aa)). Position 352 (glycine 352) interacts with L-glutamine. Cysteine 379 (nucleophile; for glutamine hydrolysis) is an active-site residue. Residues 380 to 383 (LGMQ), glutamate 403, and arginine 470 each bind L-glutamine. Residues histidine 515 and glutamate 517 contribute to the active site.

This sequence belongs to the CTP synthase family. In terms of assembly, homotetramer.

The catalysed reaction is UTP + L-glutamine + ATP + H2O = CTP + L-glutamate + ADP + phosphate + 2 H(+). It carries out the reaction L-glutamine + H2O = L-glutamate + NH4(+). It catalyses the reaction UTP + NH4(+) + ATP = CTP + ADP + phosphate + 2 H(+). The protein operates within pyrimidine metabolism; CTP biosynthesis via de novo pathway; CTP from UDP: step 2/2. Allosterically activated by GTP, when glutamine is the substrate; GTP has no effect on the reaction when ammonia is the substrate. The allosteric effector GTP functions by stabilizing the protein conformation that binds the tetrahedral intermediate(s) formed during glutamine hydrolysis. Inhibited by the product CTP, via allosteric rather than competitive inhibition. Functionally, catalyzes the ATP-dependent amination of UTP to CTP with either L-glutamine or ammonia as the source of nitrogen. Regulates intracellular CTP levels through interactions with the four ribonucleotide triphosphates. In Yersinia pseudotuberculosis serotype O:1b (strain IP 31758), this protein is CTP synthase.